The sequence spans 80 residues: MAKNLNSVSFIVLLLVLLVASTEILKSDAACFTFLGECGPEPFTGSNADCLACCVALYKSPPVCAGRVEGVPAHCHCYKS.

The signal sequence occupies residues 1 to 29; the sequence is MAKNLNSVSFIVLLLVLLVASTEILKSDA. Cystine bridges form between cysteine 38-cysteine 64, cysteine 50-cysteine 75, and cysteine 54-cysteine 77.

It belongs to the DEFL family.

It localises to the secreted. This is Defensin-like protein 207 from Arabidopsis thaliana (Mouse-ear cress).